The primary structure comprises 251 residues: Chromobox protein homolog 7 (251 aa).

A Chromo domain is found at phenylalanine 11–tyrosine 69. Positions glutamate 190–valine 220 are disordered. The required for cellular lifespan extension stretch occupies residues threonine 223 to glutamate 236.

As to quaternary structure, component of a PRC1-like complex. Interacts with RING1 and RNF2/RING1B, but not with BMI1, EED or EZH2. Interacts with PCGF1, PCGF2, PCGF3, PCGF5 and PCGF6.

It is found in the nucleus. Component of a Polycomb group (PcG) multiprotein PRC1-like complex, a complex class required to maintain the transcriptionally repressive state of many genes, including Hox genes, throughout development. PcG PRC1 complex acts via chromatin remodeling and modification of histones; it mediates monoubiquitination of histone H2A 'Lys-119', rendering chromatin heritably changed in its expressibility. Promotes histone H3 trimethylation at 'Lys-9' (H3K9me3). Binds to trimethylated lysine residues in histones, and possibly also other proteins. Regulator of cellular lifespan by maintaining the repression of CDKN2A, but not by inducing telomerase activity. The protein is Chromobox protein homolog 7 (CBX7) of Homo sapiens (Human).